A 252-amino-acid polypeptide reads, in one-letter code: Probable endonuclease 4 (252 aa).

Residues histidine 56, histidine 96, glutamate 129, aspartate 162, histidine 165, histidine 191, aspartate 204, histidine 206, and glutamate 233 each coordinate Zn(2+).

It belongs to the AP endonuclease 2 family. Zn(2+) is required as a cofactor.

The catalysed reaction is Endonucleolytic cleavage to 5'-phosphooligonucleotide end-products.. In terms of biological role, endonuclease IV plays a role in DNA repair. It cleaves phosphodiester bonds at apurinic or apyrimidinic (AP) sites, generating a 3'-hydroxyl group and a 5'-terminal sugar phosphate. This Mycobacterium marinum (strain ATCC BAA-535 / M) protein is Probable endonuclease 4.